Reading from the N-terminus, the 618-residue chain is Dihydroxy-acid dehydratase 1 (618 aa).

Asp-81 contributes to the Mg(2+) binding site. Cys-122 lines the [2Fe-2S] cluster pocket. 2 residues coordinate Mg(2+): Asp-123 and Lys-124. An N6-carboxylysine modification is found at Lys-124. Cys-195 contacts [2Fe-2S] cluster. Glu-491 contributes to the Mg(2+) binding site. The active-site Proton acceptor is the Ser-517.

This sequence belongs to the IlvD/Edd family. As to quaternary structure, homodimer. [2Fe-2S] cluster serves as cofactor. Mg(2+) is required as a cofactor.

It catalyses the reaction (2R)-2,3-dihydroxy-3-methylbutanoate = 3-methyl-2-oxobutanoate + H2O. The enzyme catalyses (2R,3R)-2,3-dihydroxy-3-methylpentanoate = (S)-3-methyl-2-oxopentanoate + H2O. Its pathway is amino-acid biosynthesis; L-isoleucine biosynthesis; L-isoleucine from 2-oxobutanoate: step 3/4. It functions in the pathway amino-acid biosynthesis; L-valine biosynthesis; L-valine from pyruvate: step 3/4. Functionally, functions in the biosynthesis of branched-chain amino acids. Catalyzes the dehydration of (2R,3R)-2,3-dihydroxy-3-methylpentanoate (2,3-dihydroxy-3-methylvalerate) into 2-oxo-3-methylpentanoate (2-oxo-3-methylvalerate) and of (2R)-2,3-dihydroxy-3-methylbutanoate (2,3-dihydroxyisovalerate) into 2-oxo-3-methylbutanoate (2-oxoisovalerate), the penultimate precursor to L-isoleucine and L-valine, respectively. The chain is Dihydroxy-acid dehydratase 1 from Pseudoalteromonas translucida (strain TAC 125).